A 994-amino-acid chain; its full sequence is MGACISKNSSARVSRSSALSASKQTVAASAPPGAAGDETSATGAAEEASRNSLARVDGTRASAAELERAPDGVCPDREEPGTANAEQGGVTEKKDTRETLAGMNSPKTLEAEAQEDDPKREAPNQDVPSEAPEGPKEKPGGDRKPAQKAILKQDDSHTEEEKLNAHLAYREKTPADFALIQDSLKANLVCSSLNEGEIDALAVAMQFFTFKKGDVVTKQGEPGSYFFIIHSGTFDVLVNDKRVNAMDKGKAFGEIALIHNTERSATVVASSTEGALWGVQRHTFRETLKQLSSRNFAENRQFLASVKFFEMLTEAQKNVITNALVVENFKPGQPIVKEGDAGDVLYILKSGKAKVSIGGREIRMLRKGDYFGERALLYKEPRSATITAEEFTVCVSIGRELLDRVLGNLQHVLFRNIMVEALQQSKVYELFQGDQLSKLIEAAVVKDYGADYVILDKENKTKGIRFFFVLEGELSVYAYTQNPATKEEERKLAATLKRGQAFGEEYVLNPTRPFNHYVKSVGPCKLALFTSSVLTATLGGEDIDETLDFNNKRAIIRKMYIFRYLSDHQMTMLIKAFKTVRYMSGEYIIKEGERGTRFFIIKAGEVAILKNNKRLRTLGRHDYFGERALLYDKPRTASVCANSAGVDLWVVDKSVFNEIIKGPMLAHLEERIRMQDTKVEFQDLQVVRVVGRGTFGTVKLVRHVPTDIRYALKCVSRRSVIALSQQQHIRLEREIMAENDHPFIIRLVRTFRDKEFLYFLTELVTGGELYDAIRKLGLLARSQAQFYLASIVLAIEYLHERNIAYRDLKPENILLDSQGYVKLIDFGCAKKMQGRAYTLVGTPHYMAPEVILGKGYTLTADTWAFGVCLYEFMCGPLPFGNDAEDQLEIFRDILTGKLVFPHYVTDQDAINLMKRLLCRLPEVRIGCSINGYKDIKEHAFFGDFDWDKLAGRGLPPPLAPKGETYAEDTEQSSFELDEDDTIVLEDEYDWDKDF.

Residues 1–162 (MGACISKNSS…QDDSHTEEEK (162 aa)) form a disordered region. Glycine 2 carries the N-myristoyl glycine lipid modification. The S-palmitoyl cysteine moiety is linked to residue cysteine 4. 2 stretches are compositionally biased toward low complexity: residues 9–22 (SSAR…LSAS) and 33–46 (GAAG…GAAE). Basic and acidic residues-rich tracts occupy residues 65-80 (ELER…REEP) and 133-162 (EGPK…EEEK). 4 cNMP-binding domain regions span residues 189–305 (VCSS…FLAS), 308–407 (FFEM…RVLG), 463–539 (GIRF…ATLG), and 561–660 (IFRY…NEII). Positions 253, 254, 256, 263, and 264 each coordinate 3',5'-cyclic GMP. Residues arginine 616, glycine 625, glutamate 626, alanine 628, arginine 635, and threonine 636 each contribute to the 3',5'-cyclic GMP site. Residues 684–941 (LQVVRVVGRG…YKDIKEHAFF (258 aa)) enclose the Protein kinase domain. ATP-binding positions include 690-698 (VGRGTFGTV) and lysine 713. Residue aspartate 807 is the Proton acceptor of the active site. The 53-residue stretch at 942-994 (GDFDWDKLAGRGLPPPLAPKGETYAEDTEQSSFELDEDDTIVLEDEYDWDKDF) folds into the AGC-kinase C-terminal domain. The segment at 954–976 (LPPPLAPKGETYAEDTEQSSFEL) is disordered. Over residues 965–976 (YAEDTEQSSFEL) the composition is skewed to acidic residues.

The protein belongs to the protein kinase superfamily. AGC Ser/Thr protein kinase family. cGMP subfamily. Mg(2+) is required as a cofactor.

The protein resides in the cytoplasm. Its subcellular location is the membrane. It is found in the cell membrane. The catalysed reaction is L-seryl-[protein] + ATP = O-phospho-L-seryl-[protein] + ADP + H(+). It carries out the reaction L-threonyl-[protein] + ATP = O-phospho-L-threonyl-[protein] + ADP + H(+). Activated by cGMP. The cGMP-binding domains acts cooperatively to activate PKG. Inhibited by the antiparasitic small molecule 4-[2-(4-fluorophenyl)-5-(1-methylpiperidine-4-yl)-1Hpyrrol- 3-yl]pyridine (compound 1). Serine/threonine protein kinase which acts as a downstream effector of the second messenger cGMP. Plays an essential role in tachyzoite invasion of and egress from host cells. During invasion of host cells, regulates the apico-basal flux of F-actin probably via Ca(2+)-mediated activation of CDPK1. In tachyzoites, required for microneme secretion. Required for tachyzoite gliding motility. In terms of biological role, plays an essential role in parasite invasion of and egress from host cells, and microneme secretion. Its function is as follows. Dispensable for parasite invasion of and egress from host cells, and microneme secretion. This is cGMP-dependent protein kinase from Toxoplasma gondii.